A 995-amino-acid chain; its full sequence is MSAEAADREAATSSRPCTPPQTCWFEFLLEESLLEKHLRKPCPDPAPVQLIVQFLEQASKPSVNEQNQVQPPPDNKRNRILKLLALKVAAHLKWDLDILEKSLSVPVLNMLLNELLCISKVPPGTKHVDMDLATLPPTTAMAVLLYNRWAIRTIVQSSFPVKQAKPGPPQLSVMNQMQQEKELTENILKVLKEQAADSILVLEAALKLNKDLYVHTMRTLDLLAMEPGMVNGETESSTAGLKVKTEEMQCQVCYDLGAAYFQQGSTNSAVYENAREKFFRTKELIAEIGSLSLHCTIDEKRLAGYCQACDVLVPSSDSTSQQLTPYSQVHICLRSGNYQEVIQIFIEDNLTLSLPVQFRQSVLRELFKKAQQGNEALDEICFKVCACNTVRDILEGRTISVQFNQLFLRPNKEKIDFLLEVCSRSVNLEKASESLKGNMAAFLKNVCLGLEDLQYVFMISSHELFITLLKDEERKLLVDQMRKRSPRVNLCIKPVTSFYDIPASASVNIGQLEHQLILSVDPWRIRQILIELHGMTSERQFWTVSNKWEVPSVYSGVILGIKDNLTRDLVYILMAKGLHCSTVKDFSHAKQLFAACLELVTEFSPKLRQVMLNEMLLLDIHTHEAGTGQAGERPPSDLISRVRGYLEMRLPDIPLRQVIAEECVAFMLNWRENEYLTLQVPAFLLQSNPYVKLGQLLAATCKELPGPKESRRTAKDLWEVVVQICSVSSQHKRGNDGRVSLIKQRESTLGIMYRSELLSFIKKLREPLVLTIILSLFVKLHNVREDIVNDITAEHISIWPSSIPNLQSVDFEAVAITVKELVRYTLSINPNNHSWLIIQADIYFATNQYSAALHYYLQAGAVCSDFFNKAVPPDVYTDQVIKRMIKCCSLLNCHTQVAILCQFLREIDYKTAFKSLQEQNSHDAMDSYYDYIWDVTILEYLTYLHHKRGETDKRQIAIKAIGQTELNASNPEEVLQLAAQRRKKKFLQAMAKLYF.

T18 is subject to Phosphothreonine. The WFEF motif motif lies at W24–L29. 4 TPR repeats span residues C250–I288, S320–V356, V570–F603, and H833–F866.

Belongs to the Integrator subunit 8 family. In terms of assembly, component of the Integrator complex, composed of core subunits INTS1, INTS2, INTS3, INTS4, INTS5, INTS6, INTS7, INTS8, INTS9/RC74, INTS10, INTS11/CPSF3L, INTS12, INTS13, INTS14 and INTS15. The core complex associates with protein phosphatase 2A subunits PPP2CA and PPP2R1A, to form the Integrator-PP2A (INTAC) complex.

It is found in the nucleus. It localises to the chromosome. Component of the integrator complex, a multiprotein complex that terminates RNA polymerase II (Pol II) transcription in the promoter-proximal region of genes. The integrator complex provides a quality checkpoint during transcription elongation by driving premature transcription termination of transcripts that are unfavorably configured for transcriptional elongation: the complex terminates transcription by (1) catalyzing dephosphorylation of the C-terminal domain (CTD) of Pol II subunit POLR2A/RPB1 and SUPT5H/SPT5, (2) degrading the exiting nascent RNA transcript via endonuclease activity and (3) promoting the release of Pol II from bound DNA. The integrator complex is also involved in terminating the synthesis of non-coding Pol II transcripts, such as enhancer RNAs (eRNAs), small nuclear RNAs (snRNAs), telomerase RNAs and long non-coding RNAs (lncRNAs). Within the integrator complex, INTS8 is required for the recruitment of protein phosphatase 2A (PP2A) to transcription pause-release checkpoint. The sequence is that of Integrator complex subunit 8 from Homo sapiens (Human).